A 1081-amino-acid polypeptide reads, in one-letter code: Zinc finger protein 827 (1081 aa).

Basic and acidic residues predominate over residues 1–10 (MPRRKQEQPK). Residues 1–14 (MPRRKQEQPKRLPS) are mediates direct interaction with RBBP4. The disordered stretch occupies residues 1 to 77 (MPRRKQEQPK…DTSLGSTTPS (77 aa)). Residues 3–5 (RRK) carry the RRK motif; mediates NuRD recruitment to telomeres motif. A compositionally biased stretch (polar residues) spans 62–77 (EQSTSPDTSLGSTTPS). Glycyl lysine isopeptide (Lys-Gly) (interchain with G-Cter in SUMO2) cross-links involve residues Lys176, Lys216, and Lys226. Disordered stretches follow at residues 258–280 (KKVS…SFLS) and 305–348 (EKSS…SLEL). Positions 327–344 (VSPPPPPPPPPPPPPPPQ) are enriched in pro residues. Residues Lys360 and Lys372 each participate in a glycyl lysine isopeptide (Lys-Gly) (interchain with G-Cter in SUMO2) cross-link. C2H2-type zinc fingers lie at residues 374 to 396 (FQCP…MVIH), 402 to 424 (HQCP…MKVH), and 433 to 455 (FQCQ…MRCH). Residues Lys466, Lys475, Lys523, Lys549, Lys580, Lys587, and Lys597 each participate in a glycyl lysine isopeptide (Lys-Gly) (interchain with G-Cter in SUMO2) cross-link. A disordered region spans residues 525-553 (EPKEDNGLPTSFTLNTADRPANHTKLKDP). The span at 616-627 (VFSPESEVSTPG) shows a compositional bias: polar residues. Positions 616–640 (VFSPESEVSTPGVSEDALKPQEGKG) are disordered. Residues 631 to 640 (DALKPQEGKG) are compositionally biased toward basic and acidic residues. Glycyl lysine isopeptide (Lys-Gly) (interchain with G-Cter in SUMO2) cross-links involve residues Lys634, Lys639, and Lys658. Residue Lys673 forms a Glycyl lysine isopeptide (Lys-Gly) (interchain with G-Cter in SUMO1); alternate linkage. Residue Lys673 forms a Glycyl lysine isopeptide (Lys-Gly) (interchain with G-Cter in SUMO2); alternate linkage. Glycyl lysine isopeptide (Lys-Gly) (interchain with G-Cter in SUMO2) cross-links involve residues Lys704, Lys710, Lys742, Lys778, and Lys798. 2 consecutive C2H2-type zinc fingers follow at residues 817–839 (FPCD…LSLH) and 845–867 (YKCH…LTVH). Glycyl lysine isopeptide (Lys-Gly) (interchain with G-Cter in SUMO2) cross-links involve residues Lys870 and Lys891. 2 C2H2-type zinc fingers span residues 897–919 (YSCH…MSLH) and 929–952 (ICCT…GTKH). Residues 947–960 (HIGTKHTGEDRKTP) are compositionally biased toward basic and acidic residues. Residues 947–1013 (HIGTKHTGED…GSQPSLNSEE (67 aa)) form a disordered region. A Glycyl lysine isopeptide (Lys-Gly) (interchain with G-Cter in SUMO2) cross-link involves residue Lys958. A compositionally biased stretch (low complexity) spans 961–978 (SESNSPSSSSLSALSDSA). Over residues 979 to 988 (NSKDDSDGSQ) the composition is skewed to basic and acidic residues. Residue Lys1014 forms a Glycyl lysine isopeptide (Lys-Gly) (interchain with G-Cter in SUMO2) linkage. 2 consecutive C2H2-type zinc fingers follow at residues 1019–1041 (FECV…LQIH) and 1047–1069 (FECD…KKCH).

This sequence belongs to the krueppel C2H2-type zinc-finger protein family. Part of a transcription inhibitory ribonucleoprotein complex composed at least of the circular RNA circZNF827, HNRNPK and HNRNPL. Interacts with the nucleosome remodeling and histone deacetylase/NuRD complex. Interacts with RBBP4; the interaction is direct and recruits RBBP4, a component of the NuRD complex, to telomeres.

Its subcellular location is the nucleus. It is found in the chromosome. The protein resides in the telomere. In terms of biological role, as part of a ribonucleoprotein complex composed at least of HNRNPK, HNRNPL and the circular RNA circZNF827 that nucleates the complex on chromatin, may negatively regulate the transcription of genes involved in neuronal differentiation. Could also recruit the nucleosome remodeling and histone deacetylase/NuRD complex to telomeric regions of chromosomes to regulate chromatin remodeling as part of telomere maintenance. This chain is Zinc finger protein 827 (ZNF827), found in Macaca fascicularis (Crab-eating macaque).